A 503-amino-acid chain; its full sequence is ATP synthase subunit alpha (503 aa).

170–177 is a binding site for ATP; that stretch reads GDKQTGKT.

This sequence belongs to the ATPase alpha/beta chains family. As to quaternary structure, F-type ATPases have 2 components, CF(1) - the catalytic core - and CF(0) - the membrane proton channel. CF(1) has five subunits: alpha(3), beta(3), gamma(1), delta(1), epsilon(1). CF(0) has three main subunits: a(1), b(2) and c(9-12). The alpha and beta chains form an alternating ring which encloses part of the gamma chain. CF(1) is attached to CF(0) by a central stalk formed by the gamma and epsilon chains, while a peripheral stalk is formed by the delta and b chains.

Its subcellular location is the cell inner membrane. The enzyme catalyses ATP + H2O + 4 H(+)(in) = ADP + phosphate + 5 H(+)(out). Functionally, produces ATP from ADP in the presence of a proton gradient across the membrane. The alpha chain is a regulatory subunit. The protein is ATP synthase subunit alpha of Helicobacter acinonychis (strain Sheeba).